Here is a 197-residue protein sequence, read N- to C-terminus: Inner membrane protein RclC (197 aa).

Residues 1-15 are Periplasmic-facing; it reads MEKYLHLLSRGDKIG. Residues 16 to 36 traverse the membrane as a helical segment; sequence LTLIRLSIAIVFMWIGLLKFV. Over 37–85 the chain is Cytoplasmic; it reads PYEADSITPFVANSPLMSFFYEHPEDYKQYLTHEGEYKPEARAWQTANN. A helical membrane pass occupies residues 86–106; the sequence is TYGFSNGLGVVEVIIALLVLA. Residues 107 to 112 lie on the Periplasmic side of the membrane; the sequence is NPVNRW. The helical transmembrane segment at 113-133 threads the bilayer; the sequence is LGLLGGLMAFTTPLVTLSFLI. Topologically, residues 134–197 are cytoplasmic; sequence TTPEAWVPAL…ESSSTLKTEY (64 aa).

Its subcellular location is the cell inner membrane. In terms of biological role, probably involved in reactive chlorine species (RCS) stress resistance. This is Inner membrane protein RclC (rclC) from Escherichia coli (strain K12).